Reading from the N-terminus, the 774-residue chain is FT-interacting protein 7 (774 aa).

Positions 1 to 17 are enriched in basic and acidic residues; sequence MMQRPFRPEEYSLKETS. Residues 1 to 25 form a disordered region; that stretch reads MMQRPFRPEEYSLKETSPHLGGGAA. 3 consecutive C2 domains span residues 23 to 143, 182 to 305, and 346 to 472; these read GAAG…PQWY, IPGD…SQWY, and YSSD…THAY. Positions 56, 62, 109, 111, and 116 each coordinate Ca(2+). 3 helical membrane-spanning segments follow: residues 575 to 595, 606 to 626, and 714 to 734; these read IMGVLSPLIAVAKWFDQICHW, ILFVILVLYPELILPTIFLYL, and ATALFVTFCFVAAIVLYVTPF.

It belongs to the MCTP family. In terms of assembly, interacts with OSH1. Requires Ca(2+) as cofactor. Expressed in roots, stems, lemma, palea, pistils and ovules. Expressed at low levels in leaves.

It localises to the cell membrane. In terms of biological role, promotes nuclear translocation of the transcription factor OSH1, which directly suppresses the auxin biosynthetic gene YUCCA4 during the late development of anthers. Reduction of auxin levels at late stage of anther development, after meiosis of microspore mother cells, is necessary for normal anther dehiscence and seed setting. Required for jasmonate (JA) biosynthetic genes expression and JA production in anthers. The protein is FT-interacting protein 7 of Oryza sativa subsp. japonica (Rice).